A 168-amino-acid chain; its full sequence is Small ribosomal subunit protein bS6 (168 aa).

The segment at 103 to 168 (RQAIAEEKEK…AAADKSDDNA (66 aa)) is disordered. Over residues 106–115 (IAEEKEKKAE) the composition is skewed to basic and acidic residues. A compositionally biased stretch (low complexity) spans 116 to 125 (GQAAADAAPA).

Belongs to the bacterial ribosomal protein bS6 family.

Functionally, binds together with bS18 to 16S ribosomal RNA. The sequence is that of Small ribosomal subunit protein bS6 from Desulfosudis oleivorans (strain DSM 6200 / JCM 39069 / Hxd3) (Desulfococcus oleovorans).